Consider the following 453-residue polypeptide: Nuclear distribution protein nudF-2 (453 aa).

The 33-residue stretch at 9-41 (QADELHRALIAYLTAANLPNTAAALREELNLSE) folds into the LisH domain. A coiled-coil region spans residues 62–88 (SVVRLQKKIMDLESRNHILQSELDNAT). Residues 84-107 (LDNATPTSRQNKDPVAWLPRAPPR) are disordered. WD repeat units follow at residues 112–153 (SHRD…RTIK), 155–195 (HTKA…KNIR), 199–239 (GHDH…CVKT), 242–281 (GHAEWVRDVCPSLDGKYILSTSDDYTSRLWDVTITNPEPK), 286–345 (GHEH…IKTL), 347–386 (GHDNWVRGLVFHPGGKYLLSVSDDKTLRCWDLTQEGKCVK), and 391–449 (AHGH…LNVR).

This sequence belongs to the WD repeat LIS1/nudF family. In terms of assembly, self-associates. Interacts with ro-11/nde1 and dynein.

The protein resides in the cytoplasm. Its subcellular location is the cytoskeleton. It is found in the spindle pole. In terms of biological role, positively regulates the activity of the minus-end directed microtubule motor protein dynein. May enhance dynein-mediated microtubule sliding by targeting dynein to the microtubule plus end. Required for nuclear migration during vegetative growth as well as development. Required for retrograde early endosome (EE) transport from the hyphal tip. Required for localization of dynein to the mitotic spindle poles. Recruits additional proteins to the dynein complex at SPBs. The chain is Nuclear distribution protein nudF-2 (nmp-1) from Neurospora crassa (strain ATCC 24698 / 74-OR23-1A / CBS 708.71 / DSM 1257 / FGSC 987).